Consider the following 463-residue polypeptide: uncharacterized protein (463 aa).

12 helical membrane-spanning segments follow: residues 17-37, 40-60, 97-117, 122-142, 153-173, 201-221, 244-264, 278-298, 335-355, 357-377, 401-421, and 429-449; these read ISLMSLGAAIGVGLFLGSASA, LAGPGILVAYAASGLVMFFIM, WFLWVVTCMAEITAVGIYMGF, VPNWIWALSALVIMTGVNFLA, FALIKIVAILSMIAVGLLMII, GVLLSLQMVMFAYLGIEMIGV, ILIFYVGALFVIMSIYPWQEI, VGIPSAAGIINFVVLTAALSS, AVLASAGALLVGVLLNYVVPA, VFTWVTSIATFGAIWTWAIIL, LFPFTSYVSLAFLAFVVILMA, and AVIIGPIWFLILLAVYYGKGF.

This sequence belongs to the amino acid-polyamine-organocation (APC) superfamily.

The protein resides in the cell membrane. This is an uncharacterized protein from Bacillus subtilis (strain 168).